A 176-amino-acid chain; its full sequence is Inner membrane-spanning protein YciB (176 aa).

6 consecutive transmembrane segments (helical) span residues 3–23 (FLFDLFPIILFFAAFKVWGIF), 24–44 (TATAVAIVATLAQVAWVAFRH), 49–69 (TMLWVSLGVIVVFGGATLVLH), 81–101 (LYWLFAIGLLAARYAFGNNLI), 121–141 (VAWALFFAVLGVANLYVVHNF), and 149–169 (FKLFGTTGAMVVFIILQSLWL).

Belongs to the YciB family.

The protein resides in the cell inner membrane. Plays a role in cell envelope biogenesis, maintenance of cell envelope integrity and membrane homeostasis. The polypeptide is Inner membrane-spanning protein YciB (Burkholderia lata (strain ATCC 17760 / DSM 23089 / LMG 22485 / NCIMB 9086 / R18194 / 383)).